The following is a 563-amino-acid chain: uncharacterized protein (563 aa).

The Cytoplasmic segment spans residues 1–13; sequence MASRSCICQVSAG. Residues 14–34 traverse the membrane as a helical segment; it reads IIFLIGAALLVAGLVIVLNVF. At 35 to 528 the chain is on the lumenal side; sequence PNIVNNQIND…LFTPVSTVNT (494 aa). Asparagine 43, asparagine 112, asparagine 133, asparagine 188, asparagine 265, asparagine 295, asparagine 315, and asparagine 502 each carry an N-linked (GlcNAc...) asparagine glycan. A helical membrane pass occupies residues 529 to 549; that stretch reads ICWIAVGLGAGLIALSIVMVI. The Cytoplasmic segment spans residues 550–563; it reads VSFCCFRDEHHKTS.

Belongs to the CD36 family.

The protein localises to the membrane. This is an uncharacterized protein from Caenorhabditis elegans.